The sequence spans 263 residues: Granzyme K (263 aa).

The signal sequence occupies residues 1-21; that stretch reads MRFSSWALVSLVAGVYMSSEC. A propeptide spans 22–25 (activation peptide); it reads FHTE. A Peptidase S1 domain is found at 26-258; that stretch reads IIGGREVQPH…YQTWIKSKLA (233 aa). A disulfide bond links Cys51 and Cys67. Active-site charge relay system residues include His66 and Asp115. Cystine bridges form between Cys148/Cys219, Cys180/Cys198, and Cys209/Cys233. The Charge relay system role is filled by Ser213.

It belongs to the peptidase S1 family. Granzyme subfamily.

It localises to the cytoplasmic granule. In Mus musculus (Mouse), this protein is Granzyme K (Gzmk).